Consider the following 91-residue polypeptide: Small ribosomal subunit protein uS15 (91 aa).

The protein belongs to the universal ribosomal protein uS15 family. Part of the 30S ribosomal subunit. Forms a bridge to the 50S subunit in the 70S ribosome, contacting the 23S rRNA.

One of the primary rRNA binding proteins, it binds directly to 16S rRNA where it helps nucleate assembly of the platform of the 30S subunit by binding and bridging several RNA helices of the 16S rRNA. Functionally, forms an intersubunit bridge (bridge B4) with the 23S rRNA of the 50S subunit in the ribosome. In Rickettsia bellii (strain OSU 85-389), this protein is Small ribosomal subunit protein uS15.